Reading from the N-terminus, the 260-residue chain is Salicylic acid-binding protein 2 (260 aa).

Salicylate is bound by residues alanine 13, serine 81, and lysine 159. The active-site Acyl-ester intermediate is serine 81. Active-site charge relay system residues include aspartate 210 and histidine 238. Salicylate is bound by residues histidine 238, leucine 253, and histidine 257.

The protein belongs to the AB hydrolase superfamily. Methylesterase family.

The enzyme catalyses methyl salicylate + H2O = salicylate + methanol + H(+). It participates in plant hormone biosynthesis. Esterase activity is down-regulated by salicylic acid (SA) or by tetraFA, a synthetic SA analog. Its function is as follows. Required to convert methyl salicylate (MeSA) to salicylic acid (SA) as part of the signal transduction pathways that activate systemic acquired resistance in systemic tissue. MeSA is believed to be an inactive form that needs to be demethylated to exert a biological effect. Also able to catalyze the conversion of acibenzolar-S-methyl into acibenzolar to induce systemic acquired resistance. In Nicotiana tabacum (Common tobacco), this protein is Salicylic acid-binding protein 2.